The chain runs to 268 residues: tRNA pseudouridine synthase A (268 aa).

Asp-52 functions as the Nucleophile in the catalytic mechanism. Tyr-110 is a binding site for substrate.

The protein belongs to the tRNA pseudouridine synthase TruA family. Homodimer.

The enzyme catalyses uridine(38/39/40) in tRNA = pseudouridine(38/39/40) in tRNA. Its function is as follows. Formation of pseudouridine at positions 38, 39 and 40 in the anticodon stem and loop of transfer RNAs. This Prochlorococcus marinus (strain MIT 9301) protein is tRNA pseudouridine synthase A.